We begin with the raw amino-acid sequence, 104 residues long: Large ribosomal subunit protein uL23 (104 aa).

This sequence belongs to the universal ribosomal protein uL23 family. Part of the 50S ribosomal subunit. Contacts protein L29, and trigger factor when it is bound to the ribosome.

One of the early assembly proteins it binds 23S rRNA. One of the proteins that surrounds the polypeptide exit tunnel on the outside of the ribosome. Forms the main docking site for trigger factor binding to the ribosome. In Paraburkholderia phytofirmans (strain DSM 17436 / LMG 22146 / PsJN) (Burkholderia phytofirmans), this protein is Large ribosomal subunit protein uL23.